Here is a 588-residue protein sequence, read N- to C-terminus: MSKRTTYCGLVTEAFLGQEITLKGWVNNRRDLGGLIFVDLRDREGIVQVVFNPAFSEEALKIAETVRSEYVVEVQGTVTKRDPETVNPKIKTGQVEVQVTNIKVINKSETPPFSINEENVNVDENIRLKYRYLDLRRQELAQTFKMRHQITRSIRQYLDDEGFFDIETPVLTKSTPEGARDYLVPSRVHDGEFYALPQSPQLFKQLLMISGFDKYYQIVKCFRDEDLRADRQPEFTQVDIEMSFVDQEDVMQMGEEMLKKVVKEVKGVEINGAFPRMTYKEAMRRYGSDKPDTRFEMELIDVSQLGRDMDFKVFKDTVENDGEIKAIVAKGAAEQYTRKDMDALTEFVNIYGAKGLAWVKVVEDGLTGPIGRFFEAENVETLLTLTGAEAGDLVMFVADKPNVVAQSLGALRVKLAKELGLIDETKLNFLWVTDWPLLEYDEDAKRYVAAHHPFTSPKEADIAKLGTAPEEAEANAYDIVLNGYELGGGSIRIHDGELQEKMFEVLGFTKEQAQEQFGFLLDAFKYGAPPHGGIALGLDRLVMLLTNRTNLRDTIAFPKTASATCLLTNAPGEVSDKQLEELSLRIRH.

Position 177 (Glu-177) interacts with L-aspartate. The interval 201–204 is aspartate; that stretch reads QLFK. Arg-223 contributes to the L-aspartate binding site. ATP-binding positions include 223 to 225 and Gln-232; that span reads RDE. His-451 is a binding site for L-aspartate. Position 485 (Glu-485) interacts with ATP. Residue Arg-492 coordinates L-aspartate. 537–540 contributes to the ATP binding site; it reads GLDR.

The protein belongs to the class-II aminoacyl-tRNA synthetase family. Type 1 subfamily. In terms of assembly, homodimer.

It localises to the cytoplasm. It catalyses the reaction tRNA(Asp) + L-aspartate + ATP = L-aspartyl-tRNA(Asp) + AMP + diphosphate. Functionally, catalyzes the attachment of L-aspartate to tRNA(Asp) in a two-step reaction: L-aspartate is first activated by ATP to form Asp-AMP and then transferred to the acceptor end of tRNA(Asp). This chain is Aspartate--tRNA ligase, found in Staphylococcus aureus (strain MRSA252).